We begin with the raw amino-acid sequence, 262 residues long: Hydroxyethylthiazole kinase (262 aa).

Substrate is bound at residue M50. ATP-binding residues include R125 and T171. G198 is a binding site for substrate.

Belongs to the Thz kinase family. Mg(2+) is required as a cofactor.

It carries out the reaction 5-(2-hydroxyethyl)-4-methylthiazole + ATP = 4-methyl-5-(2-phosphooxyethyl)-thiazole + ADP + H(+). The protein operates within cofactor biosynthesis; thiamine diphosphate biosynthesis; 4-methyl-5-(2-phosphoethyl)-thiazole from 5-(2-hydroxyethyl)-4-methylthiazole: step 1/1. Catalyzes the phosphorylation of the hydroxyl group of 4-methyl-5-beta-hydroxyethylthiazole (THZ). The chain is Hydroxyethylthiazole kinase from Escherichia coli (strain K12 / MC4100 / BW2952).